The sequence spans 110 residues: Ig kappa chain V region 3547 (110 aa).

Residues 1–23 (AYDMTQTPSSVSAAVGGTVTINC) are framework-1. A complementarity-determining-1 region spans residues 24–34 (QASEDISANLA). Residues 35-49 (WYQQKPGQPPKLLIY) are framework-2. Positions 50–56 (AASDLAS) are complementarity-determining-2. The segment at 57–88 (GVPSRFKGSGSGTEYTLTISGVQCADAATYYC) is framework-3. Positions 89-99 (QSADYSGSAVT) are complementarity-determining-3. Residues 100 to 109 (FGGGTEVVVK) are framework-4.

In Oryctolagus cuniculus (Rabbit), this protein is Ig kappa chain V region 3547.